Consider the following 487-residue polypeptide: N-succinylglutamate 5-semialdehyde dehydrogenase (487 aa).

221-226 (GSSRTG) is a binding site for NAD(+). Active-site residues include Glu244 and Cys278.

Belongs to the aldehyde dehydrogenase family. AstD subfamily.

It catalyses the reaction N-succinyl-L-glutamate 5-semialdehyde + NAD(+) + H2O = N-succinyl-L-glutamate + NADH + 2 H(+). It participates in amino-acid degradation; L-arginine degradation via AST pathway; L-glutamate and succinate from L-arginine: step 4/5. Catalyzes the NAD-dependent reduction of succinylglutamate semialdehyde into succinylglutamate. This Pseudomonas putida (strain GB-1) protein is N-succinylglutamate 5-semialdehyde dehydrogenase.